A 449-amino-acid polypeptide reads, in one-letter code: Glutamate--tRNA ligase 1 (449 aa).

Residues 11-21 carry the 'HIGH' region motif; sequence PSPTGSLHVGN. Positions 242-246 match the 'KMSKS' region motif; the sequence is PLSKR. Position 245 (Lys-245) interacts with ATP.

Belongs to the class-I aminoacyl-tRNA synthetase family. Glutamate--tRNA ligase type 1 subfamily. Monomer.

Its subcellular location is the cytoplasm. It catalyses the reaction tRNA(Glu) + L-glutamate + ATP = L-glutamyl-tRNA(Glu) + AMP + diphosphate. Its function is as follows. Catalyzes the attachment of glutamate to tRNA(Glu) in a two-step reaction: glutamate is first activated by ATP to form Glu-AMP and then transferred to the acceptor end of tRNA(Glu). In Parvibaculum lavamentivorans (strain DS-1 / DSM 13023 / NCIMB 13966), this protein is Glutamate--tRNA ligase 1.